Here is a 471-residue protein sequence, read N- to C-terminus: Phosphatidylserine synthase 1 (471 aa).

At Ala2 the chain carries N-acetylalanine. Over 2–35 (ASCVGSRTLSKDDVNYRMHFRMINEQQVEDITID) the chain is Cytoplasmic. Residues 36–56 (FFYRPHTITLLSFTIVSLMYF) form a helical membrane-spanning segment. The Lumenal segment spans residues 57–72 (AFTRDDSVPEDNIWRG). Residues 73–93 (ILSVIFFFLIISVLAFPNGPF) form a helical membrane-spanning segment. Residues 94 to 102 (TRPHPALWR) lie on the Cytoplasmic side of the membrane. A helical membrane pass occupies residues 103–123 (MVFGLSVLYFLFLVFLLFLNF). The Lumenal segment spans residues 124-160 (EQVKSLMYWLDPNLRYATREADIMEYAVNCHVITWER). Residues 161–181 (IVSHFDIFAFGHFWGWAMKAL) traverse the membrane as a helical segment. At 182–186 (LIRSY) the chain is on the cytoplasmic side. A helical membrane pass occupies residues 187–207 (GLCWTISITWELTELFFMHLL). The Lumenal segment spans residues 208–216 (PNFAECWWD). Residues 217-237 (QVILDILLCNGGGIWLGMVVC) form a helical membrane-spanning segment. Residues 238–286 (RFLEMRTYHWASFKDIHTTTGKIKRAVLQFTPASWTYVRWFDPKSSFQR) are Cytoplasmic-facing. The helical transmembrane segment at 287 to 307 (VAGVYLFMIIWQLTELNTFFL) threads the bilayer. The Lumenal segment spans residues 308–309 (KH). A helical membrane pass occupies residues 310–330 (IFVFQASHPLSWCRILFIGCI). Residues 331 to 355 (TAPTVRQYYAYLTDTQCKRVGTQCW) lie on the Cytoplasmic side of the membrane. The helical transmembrane segment at 356-376 (VFGVIGFLEAIVCIKFGQDLF) threads the bilayer. Residues 377 to 380 (SKTQ) are Lumenal-facing. The chain crosses the membrane as a helical span at residues 381–401 (ILYVVFWLLCVAFTTFLCLYG). The Cytoplasmic portion of the chain corresponds to 402-471 (MVWYAEHYGH…SKVTNGVGKK (70 aa)). Phosphoserine is present on residues Ser417, Ser440, and Ser452. Residues 426-471 (ISWHHGKGSKGSEDSPPKHSSNNESHSSRRRNRHSKSKVTNGVGKK) form a disordered region. Over residues 453–462 (SRRRNRHSKS) the composition is skewed to basic residues.

This sequence belongs to the phosphatidyl serine synthase family.

Its subcellular location is the endoplasmic reticulum membrane. It catalyses the reaction a 1,2-diacyl-sn-glycero-3-phosphoethanolamine + L-serine = a 1,2-diacyl-sn-glycero-3-phospho-L-serine + ethanolamine. The enzyme catalyses a 1,2-diacyl-sn-glycero-3-phosphocholine + L-serine = a 1,2-diacyl-sn-glycero-3-phospho-L-serine + choline. It participates in phospholipid metabolism; phosphatidylserine biosynthesis. Inhibited by exogenous phosphatidylserine. Functionally, catalyzes a base-exchange reaction in which the polar head group of phosphatidylethanolamine (PE) or phosphatidylcholine (PC) is replaced by L-serine. Catalyzes mainly the conversion of phosphatidylcholine. Also converts, in vitro and to a lesser extent, phosphatidylethanolamine. The polypeptide is Phosphatidylserine synthase 1 (PTDSS1) (Cricetulus griseus (Chinese hamster)).